Here is a 411-residue protein sequence, read N- to C-terminus: Serine--tRNA ligase (411 aa).

L-serine is bound at residue Thr226–Glu228. Arg257–Glu259 is an ATP binding site. Residue Glu280 participates in L-serine binding. Glu344–Ser347 contributes to the ATP binding site. Ser379 is a binding site for L-serine.

It belongs to the class-II aminoacyl-tRNA synthetase family. Type-1 seryl-tRNA synthetase subfamily. Homodimer. The tRNA molecule binds across the dimer.

The protein resides in the cytoplasm. The catalysed reaction is tRNA(Ser) + L-serine + ATP = L-seryl-tRNA(Ser) + AMP + diphosphate + H(+). The enzyme catalyses tRNA(Sec) + L-serine + ATP = L-seryl-tRNA(Sec) + AMP + diphosphate + H(+). It functions in the pathway aminoacyl-tRNA biosynthesis; selenocysteinyl-tRNA(Sec) biosynthesis; L-seryl-tRNA(Sec) from L-serine and tRNA(Sec): step 1/1. Functionally, catalyzes the attachment of serine to tRNA(Ser). Is also able to aminoacylate tRNA(Sec) with serine, to form the misacylated tRNA L-seryl-tRNA(Sec), which will be further converted into selenocysteinyl-tRNA(Sec). The polypeptide is Serine--tRNA ligase (Campylobacter jejuni subsp. jejuni serotype O:2 (strain ATCC 700819 / NCTC 11168)).